The chain runs to 300 residues: Protein ARMCX6 (300 aa).

At 1–6 (MGRARE) the chain is on the mitochondrial intermembrane side. Mitochondrion outer membrane (MOM)-targeting sequence stretches follow at residues 1–6 (MGRARE) and 26–36 (KLTIGRDDSEK). The helical; Signal-anchor transmembrane segment at 7-27 (VGWMAAGLMIGAGACYCVYKL) threads the bilayer. The Cytoplasmic segment spans residues 28-300 (TIGRDDSEKL…REILLETPAP (273 aa)). Disordered stretches follow at residues 35-54 (EKLEEEGEEEWDDDQELDEE) and 69-99 (WTEDGDWTEPGAPGGTEDRPSGGGKANRAHP).

It belongs to the eutherian X-chromosome-specific Armcx family.

Its subcellular location is the mitochondrion. It localises to the mitochondrion outer membrane. May regulate the dynamics and distribution of mitochondria in neural cells. The protein is Protein ARMCX6 (ARMCX6) of Homo sapiens (Human).